Reading from the N-terminus, the 730-residue chain is Procollagen-lysine,2-oxoglutarate 5-dioxygenase 1 (730 aa).

Residues 1-20 form the signal peptide; the sequence is MVPPAVLLPWVVLPLLGVQG. N200, N403, and N541 each carry an N-linked (GlcNAc...) asparagine glycan. The region spanning 639–730 is the Fe2OG dioxygenase domain; the sequence is QFELAFVVRY…RYIAVSFIDP (92 aa). Positions 659 and 661 each coordinate Fe cation. Residue N689 is glycosylated (N-linked (GlcNAc...) asparagine). Residue H711 coordinates Fe cation. Residue R721 is part of the active site.

Homodimer. Fe(2+) serves as cofactor. It depends on L-ascorbate as a cofactor.

The protein resides in the rough endoplasmic reticulum membrane. The catalysed reaction is L-lysyl-[collagen] + 2-oxoglutarate + O2 = (5R)-5-hydroxy-L-lysyl-[collagen] + succinate + CO2. Functionally, forms hydroxylysine residues in -Xaa-Lys-Gly- sequences in collagens. These hydroxylysines serve as sites of attachment for carbohydrate units and are essential for the stability of the intermolecular collagen cross-links. The sequence is that of Procollagen-lysine,2-oxoglutarate 5-dioxygenase 1 (PLOD1) from Gallus gallus (Chicken).